The chain runs to 416 residues: Tyrosine--tRNA ligase (416 aa).

Tyr34 lines the L-tyrosine pocket. The 'HIGH' region motif lies at 39 to 48; sequence PTGDSLHIGH. Tyr165 and Gln169 together coordinate L-tyrosine. A 'KMSKS' region motif is present at residues 227–231; it reads KFGKT. Lys230 contacts ATP. Residues 349–416 form the S4 RNA-binding domain; it reads ENIIIWLTDN…KKHYYLARVK (68 aa).

It belongs to the class-I aminoacyl-tRNA synthetase family. TyrS type 1 subfamily. In terms of assembly, homodimer.

The protein resides in the cytoplasm. The enzyme catalyses tRNA(Tyr) + L-tyrosine + ATP = L-tyrosyl-tRNA(Tyr) + AMP + diphosphate + H(+). Catalyzes the attachment of tyrosine to tRNA(Tyr) in a two-step reaction: tyrosine is first activated by ATP to form Tyr-AMP and then transferred to the acceptor end of tRNA(Tyr). The protein is Tyrosine--tRNA ligase of Limosilactobacillus reuteri (strain DSM 20016) (Lactobacillus reuteri).